A 308-amino-acid polypeptide reads, in one-letter code: Tetraacyldisaccharide 4'-kinase (308 aa).

Residue 63 to 70 (SFGGNGKT) coordinates ATP.

The protein belongs to the LpxK family.

The catalysed reaction is a lipid A disaccharide + ATP = a lipid IVA + ADP + H(+). The protein operates within glycolipid biosynthesis; lipid IV(A) biosynthesis; lipid IV(A) from (3R)-3-hydroxytetradecanoyl-[acyl-carrier-protein] and UDP-N-acetyl-alpha-D-glucosamine: step 6/6. Functionally, transfers the gamma-phosphate of ATP to the 4'-position of a tetraacyldisaccharide 1-phosphate intermediate (termed DS-1-P) to form tetraacyldisaccharide 1,4'-bis-phosphate (lipid IVA). This Campylobacter jejuni subsp. doylei (strain ATCC BAA-1458 / RM4099 / 269.97) protein is Tetraacyldisaccharide 4'-kinase.